We begin with the raw amino-acid sequence, 226 residues long: Lipoprotein-releasing system ATP-binding protein LolD (226 aa).

The ABC transporter domain occupies Leu6–Ile226. ATP is bound at residue Gly42–Ser49.

The protein belongs to the ABC transporter superfamily. Lipoprotein translocase (TC 3.A.1.125) family. The complex is composed of two ATP-binding proteins (LolD) and two transmembrane proteins (LolC and LolE).

The protein localises to the cell inner membrane. Functionally, part of the ABC transporter complex LolCDE involved in the translocation of mature outer membrane-directed lipoproteins, from the inner membrane to the periplasmic chaperone, LolA. Responsible for the formation of the LolA-lipoprotein complex in an ATP-dependent manner. The protein is Lipoprotein-releasing system ATP-binding protein LolD of Treponema pallidum (strain Nichols).